A 539-amino-acid polypeptide reads, in one-letter code: Chaperonin GroEL (539 aa).

ATP-binding positions include 29–32, 86–90, Gly413, and Asp492; these read TLGP and DGTTT.

It belongs to the chaperonin (HSP60) family. As to quaternary structure, forms a cylinder of 14 subunits composed of two heptameric rings stacked back-to-back. Interacts with the co-chaperonin GroES.

It is found in the cytoplasm. It carries out the reaction ATP + H2O + a folded polypeptide = ADP + phosphate + an unfolded polypeptide.. In terms of biological role, together with its co-chaperonin GroES, plays an essential role in assisting protein folding. The GroEL-GroES system forms a nano-cage that allows encapsulation of the non-native substrate proteins and provides a physical environment optimized to promote and accelerate protein folding. This Fusobacterium nucleatum subsp. polymorphum (Fusobacterium polymorphum) protein is Chaperonin GroEL.